The following is an 84-amino-acid chain: Succinate dehydrogenase membrane anchor subunit (84 aa).

At 1-3 (MIT) the chain is on the mitochondrial matrix side. Residues 4–24 (FQWLIVRVVALFISLTILIDI) form a helical membrane-spanning segment. Topologically, residues 25-31 (EMFVVML) are mitochondrial intermembrane. A helical membrane pass occupies residues 32–52 (SFLIIHISIGLKAIIHDYIHF). Heme is bound at residue histidine 37. Tyrosine 49 serves as a coordination point for a ubiquinone. Over 53–58 (QKIKLM) the chain is Mitochondrial matrix. A helical membrane pass occupies residues 59–81 (LLILLRVSAIEISRSFRTFYIII). Over 82–84 (KNT) the chain is Mitochondrial intermembrane.

Part of an enzyme complex containing four subunits: a flavoprotein, an iron-sulfur protein, plus two membrane-anchoring proteins. It depends on heme as a cofactor.

The protein resides in the mitochondrion inner membrane. It participates in carbohydrate metabolism; tricarboxylic acid cycle. Membrane-anchoring subunit of succinate dehydrogenase (SDH). This Chondrus crispus (Carrageen Irish moss) protein is Succinate dehydrogenase membrane anchor subunit (SDH4).